We begin with the raw amino-acid sequence, 120 residues long: Large ribosomal subunit protein bL12 (120 aa).

The protein belongs to the bacterial ribosomal protein bL12 family. Homodimer. Part of the ribosomal stalk of the 50S ribosomal subunit. Forms a multimeric L10(L12)X complex, where L10 forms an elongated spine to which 2 to 4 L12 dimers bind in a sequential fashion. Binds GTP-bound translation factors.

Its function is as follows. Forms part of the ribosomal stalk which helps the ribosome interact with GTP-bound translation factors. Is thus essential for accurate translation. This chain is Large ribosomal subunit protein bL12, found in Clostridium botulinum (strain Alaska E43 / Type E3).